We begin with the raw amino-acid sequence, 762 residues long: PHD finger protein 20-like protein 1 (762 aa).

2 consecutive Tudor domains span residues 11–71 (ITFE…LERP) and 85–141 (VDFK…EDAK). Disordered regions lie at residues 178-231 (AKNK…TSSD), 289-359 (AEKK…CIKP), 383-411 (SVIN…RSQR), 536-559 (SLKL…EGTE), and 613-651 (LSGK…QHDY). Basic and acidic residues predominate over residues 193–211 (NKDKEERKWLKVPSKKEET). 2 stretches are compositionally biased toward polar residues: residues 319 to 340 (DISS…SSGK) and 383 to 398 (SVIN…NSPR). The segment covering 399-410 (SYKHSQRRRRSQ) has biased composition (basic residues). Positions 614–632 (SGKKKEKEKEKKEKKEKDH) are enriched in basic and acidic residues. The segment covering 633–647 (KSKQKKKKKKKKKSK) has biased composition (basic residues).

It localises to the nucleus. Functionally, is a negative regulator of proteasomal degradation of methylated proteins. Involved in the maintainance of pluripotency of embryonic stem cells. This is PHD finger protein 20-like protein 1 (PHF20L1) from Gallus gallus (Chicken).